A 312-amino-acid chain; its full sequence is MSRPRKRWRDVDGVFLLDKPQGMSSNDIMQKVKRLFQANKAGHTGALDPLATGMLPICLGEATKFSQFLLDADKRYLVTAKLGERTDTSDAEGQVVETREVNLETQQILTALEQFRGDILQVPTMFSALKHNGKPLYEYARQGITVEREARPITIFELNFIEYNAPFLTLEVHCSKGTYIRTLVDDLGEVLGCGAHVTMLRRTAVADYPVAEMMPINELQLLAESFPLSELDRLLLPTDTAVSKLPALHLDAEQSKAIGFGQRVKFANEQQLSGQVRLFSAENLFLGVLNRREYYSPTTINYTIRITSLPFL.

Asp-48 (nucleophile) is an active-site residue.

It belongs to the pseudouridine synthase TruB family. Type 1 subfamily.

The catalysed reaction is uridine(55) in tRNA = pseudouridine(55) in tRNA. Its function is as follows. Responsible for synthesis of pseudouridine from uracil-55 in the psi GC loop of transfer RNAs. The sequence is that of tRNA pseudouridine synthase B from Haemophilus influenzae (strain ATCC 51907 / DSM 11121 / KW20 / Rd).